Consider the following 252-residue polypeptide: 3-deoxy-manno-octulosonate cytidylyltransferase (252 aa).

This sequence belongs to the KdsB family.

Its subcellular location is the cytoplasm. The catalysed reaction is 3-deoxy-alpha-D-manno-oct-2-ulosonate + CTP = CMP-3-deoxy-beta-D-manno-octulosonate + diphosphate. Its pathway is nucleotide-sugar biosynthesis; CMP-3-deoxy-D-manno-octulosonate biosynthesis; CMP-3-deoxy-D-manno-octulosonate from 3-deoxy-D-manno-octulosonate and CTP: step 1/1. The protein operates within bacterial outer membrane biogenesis; lipopolysaccharide biosynthesis. Functionally, activates KDO (a required 8-carbon sugar) for incorporation into bacterial lipopolysaccharide in Gram-negative bacteria. This is 3-deoxy-manno-octulosonate cytidylyltransferase from Vibrio campbellii (strain ATCC BAA-1116).